The following is a 428-amino-acid chain: Putative F-box protein At3g22421 (428 aa).

The F-box domain maps to threonine 4–glutamate 50.

The sequence is that of Putative F-box protein At3g22421 from Arabidopsis thaliana (Mouse-ear cress).